The primary structure comprises 1118 residues: Carbamoyl phosphate synthase arginine-specific large chain (1118 aa).

A carboxyphosphate synthetic domain region spans residues 23–420; that stretch reads QLVEGVNSVL…AFQKALRQVD (398 aa). ATP-binding residues include R150, R190, G196, G197, K227, L229, E234, G260, V261, H262, Q303, and E317. Residues 154 to 346 form the ATP-grasp 1 domain; sequence ASALKDINIP…LAYTAAKIGL (193 aa). Mg(2+) contacts are provided by Q303, E317, and N319. Mn(2+) is bound by residues Q303, E317, and N319. The segment at 421-573 is oligomerization domain; the sequence is PSLLGFQGST…YTTYNATKND (153 aa). The tract at residues 574–958 is carbamoyl phosphate synthetic domain; sequence VEFNENGMLV…SYWTAIQSTM (385 aa). An ATP-grasp 2 domain is found at 698 to 890; that stretch reads SSILDSIDVD…FIEIAVKAFL (193 aa). The ATP site is built by R734, K773, I775, E780, G805, V806, H807, S808, Q848, and E861. Q848, E861, and N863 together coordinate Mg(2+). 3 residues coordinate Mn(2+): Q848, E861, and N863. An allosteric domain region spans residues 959–1102; that stretch reads NFHVPLPPSG…KILESHDVIV (144 aa). The MGS-like domain maps to 960-1118; that stretch reads FHVPLPPSGI…WDEFIGFKAY (159 aa).

Belongs to the CarB family. As to quaternary structure, heterodimer composed of 2 chains; the small (or glutamine) chain promotes the hydrolysis of glutamine to ammonia, which is used by the large (or ammonia) chain to synthesize carbamoyl phosphate. The cofactor is Mg(2+). Requires Mn(2+) as cofactor.

Its subcellular location is the cytoplasm. It carries out the reaction hydrogencarbonate + L-glutamine + 2 ATP + H2O = carbamoyl phosphate + L-glutamate + 2 ADP + phosphate + 2 H(+). It catalyses the reaction hydrogencarbonate + NH4(+) + 2 ATP = carbamoyl phosphate + 2 ADP + phosphate + 2 H(+). Its pathway is amino-acid biosynthesis; L-arginine biosynthesis; carbamoyl phosphate from bicarbonate: step 1/1. In terms of biological role, large subunit of the arginine-specific carbamoyl phosphate synthase (CPSase). CPSase catalyzes the formation of carbamoyl phosphate from the ammonia moiety of glutamine, hydrogencarbonate, and phosphate donated by ATP, constituting the first step of 2 biosynthetic pathways, one leading to arginine and/or urea and the other to pyrimidine nucleotides. The large subunit (synthetase) binds the substrates ammonia (free or transferred from glutamine from the small subunit), hydrogencarbonate and ATP and carries out an ATP-coupled ligase reaction, activating hydrogencarbonate by forming carboxy phosphate which reacts with ammonia to form carbamoyl phosphate. The protein is Carbamoyl phosphate synthase arginine-specific large chain (CPA2) of Saccharomyces cerevisiae (strain ATCC 204508 / S288c) (Baker's yeast).